A 396-amino-acid polypeptide reads, in one-letter code: Non-homologous end joining protein Ku (396 aa).

One can recognise a Ku domain in the interval 9 to 189; that stretch reads ISFGLVSIPV…DVAVRPQELS (181 aa). Residues 278-288 are compositionally biased toward low complexity; it reads DGDAGPAAAGV. The disordered stretch occupies residues 278-396; sequence DGDAGPAAAG…SKTPPTRRSA (119 aa). The segment covering 294 to 312 has biased composition (basic and acidic residues); that stretch reads DDKASDDKASDDKASDGRR. The span at 315 to 336 shows a compositional bias: polar residues; it reads RTSSVKGASSAPGTRSTARKTP. Over residues 337 to 396 the composition is skewed to low complexity; it reads SSTRSTAKTNAATKTPPAKTSAAKASAAKTSAAKATSSRTAPKTAPRTPTSKTPPTRRSA.

This sequence belongs to the prokaryotic Ku family. Homodimer. Interacts with LigD.

With LigD forms a non-homologous end joining (NHEJ) DNA repair enzyme, which repairs dsDNA breaks with reduced fidelity. Binds linear dsDNA with 5'- and 3'- overhangs but not closed circular dsDNA nor ssDNA. Recruits and stimulates the ligase activity of LigD. In Frankia casuarinae (strain DSM 45818 / CECT 9043 / HFP020203 / CcI3), this protein is Non-homologous end joining protein Ku.